A 284-amino-acid chain; its full sequence is Tropomyosin (284 aa).

A coiled-coil region spans residues methionine 1–tyrosine 284. A disordered region spans residues threonine 111–glutamate 131.

Belongs to the tropomyosin family. As to quaternary structure, homodimer.

Functionally, tropomyosin, in association with the troponin complex, plays a central role in the calcium dependent regulation of muscle contraction. The protein is Tropomyosin of Schistosoma haematobium (Blood fluke).